Reading from the N-terminus, the 115-residue chain is Large ribosomal subunit protein uL24 (115 aa).

It belongs to the universal ribosomal protein uL24 family. Part of the 50S ribosomal subunit.

One of two assembly initiator proteins, it binds directly to the 5'-end of the 23S rRNA, where it nucleates assembly of the 50S subunit. Functionally, one of the proteins that surrounds the polypeptide exit tunnel on the outside of the subunit. This is Large ribosomal subunit protein uL24 from Deinococcus geothermalis (strain DSM 11300 / CIP 105573 / AG-3a).